The chain runs to 101 residues: Small ribosomal subunit protein bS18c (101 aa).

It belongs to the bacterial ribosomal protein bS18 family. As to quaternary structure, component of the chloroplast small ribosomal subunit (SSU). Mature 70S chloroplast ribosomes of higher plants consist of a small (30S) and a large (50S) subunit. The 30S small subunit contains 1 molecule of ribosomal RNA (16S rRNA) and 24 different proteins. The 50S large subunit contains 3 rRNA molecules (23S, 5S and 4.5S rRNA) and 33 different proteins.

The protein resides in the plastid. Its subcellular location is the chloroplast. Its function is as follows. Component of the chloroplast ribosome (chloro-ribosome), a dedicated translation machinery responsible for the synthesis of chloroplast genome-encoded proteins, including proteins of the transcription and translation machinery and components of the photosynthetic apparatus. The protein is Small ribosomal subunit protein bS18c (RPS18) of Spinacia oleracea (Spinach).